Reading from the N-terminus, the 558-residue chain is Glutamine-dependent NAD(+) synthetase (558 aa).

The CN hydrolase domain occupies 2-262; it reads FTIALAQLNP…LALLSYDLSS (261 aa). Residue Glu42 is the Proton acceptor; for glutaminase activity of the active site. Residue Lys117 is the For glutaminase activity of the active site. Residue Tyr123 participates in L-glutamine binding. Cys153 acts as the Nucleophile; for glutaminase activity in catalysis. Ser190 and Lys196 together coordinate L-glutamine. Positions 284–558 are ligase; that stretch reads ALVLGVGDYL…IAQAFHPQGS (275 aa). Residue 304 to 311 participates in ATP binding; sequence GLSGGIDS. Asn387 provides a ligand contact to deamido-NAD(+). Residue Thr411 coordinates ATP. 2 residues coordinate deamido-NAD(+): Glu416 and Lys526.

It in the C-terminal section; belongs to the NAD synthetase family.

It catalyses the reaction deamido-NAD(+) + L-glutamine + ATP + H2O = L-glutamate + AMP + diphosphate + NAD(+) + H(+). It functions in the pathway cofactor biosynthesis; NAD(+) biosynthesis; NAD(+) from deamido-NAD(+) (L-Gln route): step 1/1. Its function is as follows. Catalyzes the ATP-dependent amidation of deamido-NAD to form NAD. Uses L-glutamine as a nitrogen source. This chain is Glutamine-dependent NAD(+) synthetase, found in Synechocystis sp. (strain ATCC 27184 / PCC 6803 / Kazusa).